Reading from the N-terminus, the 738-residue chain is 1,4-alpha-glucan branching enzyme GlgB (738 aa).

Residue aspartate 399 is the Nucleophile of the active site. Glutamate 452 functions as the Proton donor in the catalytic mechanism.

The protein belongs to the glycosyl hydrolase 13 family. GlgB subfamily. In terms of assembly, monomer.

The catalysed reaction is Transfers a segment of a (1-&gt;4)-alpha-D-glucan chain to a primary hydroxy group in a similar glucan chain.. Its pathway is glycan biosynthesis; glycogen biosynthesis. Its function is as follows. Catalyzes the formation of the alpha-1,6-glucosidic linkages in glycogen by scission of a 1,4-alpha-linked oligosaccharide from growing alpha-1,4-glucan chains and the subsequent attachment of the oligosaccharide to the alpha-1,6 position. This Chlamydia trachomatis serovar L2 (strain ATCC VR-902B / DSM 19102 / 434/Bu) protein is 1,4-alpha-glucan branching enzyme GlgB.